Here is a 1224-residue protein sequence, read N- to C-terminus: Integrin alpha pat-2 (1224 aa).

Residues 1–27 (MREGSFPRRTRLLCLLAAVVLISTVTS) form the signal peptide. Residues 28 to 1153 (FNIDTKNVVL…ASEEGRDLPW (1126 aa)) lie on the Extracellular side of the membrane. 7 FG-GAP repeats span residues 29–96 (NIDT…TCRE), 110–173 (NGSH…KTEE), 180–235 (EPAR…TDRP), 236–292 (NTEY…MMIN), 293–347 (LTDE…KPQY), 364–423 (GKQL…GVRE), and 427–490 (QKIE…PESA). 4 N-linked (GlcNAc...) asparagine glycosylation sites follow: Asn-74, Asn-110, Asn-230, and Asn-292. N-linked (GlcNAc...) asparagine glycosylation is present at Asn-610. Residues 622 to 624 (RGD) carry the Cell attachment site motif. 3 N-linked (GlcNAc...) asparagine glycosylation sites follow: Asn-681, Asn-775, and Asn-819. 2 disordered regions span residues 898–968 (LRIT…QNTG) and 981–1037 (DYEY…KARF). Residues 920–931 (REEDDESYEDET) show a composition bias toward acidic residues. A compositionally biased stretch (basic and acidic residues) spans 955–964 (VYERDEDKIR). Positions 984–1003 (YIPDDQEYDGDDFEDDDEDF) are enriched in acidic residues. Residues 1008–1023 (SKRVKRAPVPKKKKKE) show a composition bias toward basic residues. Basic and acidic residues predominate over residues 1024 to 1037 (GSRSGEPRSDKARF). A helical transmembrane segment spans residues 1154–1174 (WLYLLAILIGLAILILLILLL). Topologically, residues 1175-1224 (WRCGFFKRNRPPTEHAELRAEKQPAAHYADTQSRYAPQDQYSQGRHGQML) are cytoplasmic. The segment at 1190–1224 (AELRAEKQPAAHYADTQSRYAPQDQYSQGRHGQML) is disordered. Positions 1204 to 1224 (DTQSRYAPQDQYSQGRHGQML) are enriched in polar residues.

Belongs to the integrin alpha chain family. Heterodimer of an alpha and a beta subunit. Alpha pat-2 associates with beta pat-3.

The protein resides in the membrane. Its function is as follows. Required for muscle development probably through the regulation of the actin-myosin cytoskeleton. During the formation of neuromuscular junctions at the larval stage, negatively regulates membrane protrusion from body wall muscles, probably through lamins such as epi-1, lam-2 and unc-52. Required for distal tip cell migration and dorsal pathfinding. Required for egg-laying. May play a role in cell motility and cell-cell interactions. This Caenorhabditis briggsae protein is Integrin alpha pat-2.